A 270-amino-acid chain; its full sequence is Centriole, cilia and spindle-associated protein (270 aa).

Met-1 bears the N-acetylmethionine mark. The short motif at 9 to 15 is the ST]-E-Y-X(3)-Y motif 1; required for efficient microtubule binding and stabilization element; sequence SEYMKRY. Disordered stretches follow at residues 50 to 201 and 231 to 255; these read DDWG…SQKT and LVAQRQRAHSVDVEKNRKMKASSSE. The span at 53–67 shows a compositional bias: low complexity; sequence GPAGSSEDSASSESS. Residues 75-86 are compositionally biased toward pro residues; that stretch reads RCAPPSPPPPVE. Over residues 92 to 101 the composition is skewed to basic and acidic residues; it reads EAERRARGAP. Positions 102-118 are enriched in acidic residues; sequence EEQDAEAGDAEAEDAED. Over residues 127-144 the composition is skewed to basic and acidic residues; the sequence is KDVEDKPEQQTRTRETDK. The span at 145 to 156 shows a compositional bias: polar residues; the sequence is SPTSTEPRQQPS. An ST]-E-Y-X(3)-Y motif 2; required for efficient microtubule binding and stabilization motif is present at residues 260–266; it reads TEYMRCY.

This sequence belongs to the CCSAP family. As to quaternary structure, associates with microtubules; the association occurs on polyglutamylated tubulin.

It localises to the cytoplasm. The protein resides in the cytoskeleton. The protein localises to the microtubule organizing center. It is found in the centrosome. Its subcellular location is the centriole. It localises to the spindle. The protein resides in the cilium basal body. The protein localises to the cilium axoneme. It is found in the cell projection. Its subcellular location is the axon. It localises to the cilium. Plays a role in microtubule (MT) stabilization and this stabilization involves the maintenance of NUMA1 at the spindle poles. Colocalizes with polyglutamylated MTs to promote MT stabilization and regulate bipolar spindle formation in mitosis. Binding of CCSAP to centrosomes and the spindle around centrosomes during mitosis inhibits MT depolymerization, thereby stabilizing the mitotic spindle. May play a role in embryonic development. May be required for proper cilia beating. This is Centriole, cilia and spindle-associated protein (CCSAP) from Homo sapiens (Human).